Here is a 311-residue protein sequence, read N- to C-terminus: Olfactory receptor 2Y1 (311 aa).

The Extracellular segment spans residues 1–25 (MGSFNTSFEDGFILVGFSDWPQLEP). Residue Asn5 is glycosylated (N-linked (GlcNAc...) asparagine). A helical membrane pass occupies residues 26 to 49 (ILFVFIFIFYSLTLFGNTIIIALS). Residues 50-57 (WLDLRLHT) lie on the Cytoplasmic side of the membrane. Residues 58–79 (PMYFFLSHLSLLDLCFTTSTVP) traverse the membrane as a helical segment. Residues 80–100 (QLLINLCGVDRTITRGGCVAQ) are Extracellular-facing. Cysteines 97 and 188 form a disulfide. A helical transmembrane segment spans residues 101 to 120 (LFIYLALGSTECVLLVVMAF). The Cytoplasmic segment spans residues 121 to 139 (DRYAAVCRPLHYMAIMHPH). Residues 140–158 (LCQTLAIASWGAGFVNSLI) form a helical membrane-spanning segment. Residues 159–194 (QTGLAMAMPLCGHRLNHFFCEMPVFLKLACADTEGT) are Extracellular-facing. The chain crosses the membrane as a helical span at residues 195–218 (EAKMFVARVIVVAVPAALILGSYV). Residues 219–235 (HIAHAVLRVKSTAGRRK) are Cytoplasmic-facing. The helical transmembrane segment at 236–258 (AFGTCGSHLLVVFLFYGSAIYTY) threads the bilayer. At 259–271 (LQSIHNYSEREGK) the chain is on the extracellular side. The N-linked (GlcNAc...) asparagine glycan is linked to Asn264. The helical transmembrane segment at 272–291 (FVALFYTIITPILNPLIYTL) threads the bilayer. Residues 292-311 (RNKDVKGALWKVLWRGRDSG) lie on the Cytoplasmic side of the membrane.

The protein belongs to the G-protein coupled receptor 1 family.

It localises to the cell membrane. In terms of biological role, odorant receptor. This chain is Olfactory receptor 2Y1 (OR2Y1), found in Homo sapiens (Human).